The following is a 396-amino-acid chain: 1-deoxy-D-xylulose 5-phosphate reductoisomerase (396 aa).

NADPH-binding residues include T15, G16, S17, I18, G41, and N130. K131 contacts 1-deoxy-D-xylulose 5-phosphate. Residue E132 coordinates NADPH. Position 155 (D155) interacts with Mn(2+). Residues S156, E157, S181, and H204 each contribute to the 1-deoxy-D-xylulose 5-phosphate site. Residue E157 participates in Mn(2+) binding. G210 is a binding site for NADPH. 1-deoxy-D-xylulose 5-phosphate contacts are provided by S217, N222, K223, and E226. E226 contributes to the Mn(2+) binding site.

The protein belongs to the DXR family. Mg(2+) is required as a cofactor. Requires Mn(2+) as cofactor.

The catalysed reaction is 2-C-methyl-D-erythritol 4-phosphate + NADP(+) = 1-deoxy-D-xylulose 5-phosphate + NADPH + H(+). Its pathway is isoprenoid biosynthesis; isopentenyl diphosphate biosynthesis via DXP pathway; isopentenyl diphosphate from 1-deoxy-D-xylulose 5-phosphate: step 1/6. In terms of biological role, catalyzes the NADPH-dependent rearrangement and reduction of 1-deoxy-D-xylulose-5-phosphate (DXP) to 2-C-methyl-D-erythritol 4-phosphate (MEP). The protein is 1-deoxy-D-xylulose 5-phosphate reductoisomerase of Bifidobacterium longum (strain NCC 2705).